The primary structure comprises 2225 residues: Multifunctional protein pyr1-3 (2225 aa).

N-acetylmethionine is present on Met-1. A GATase (Glutamine amidotransferase) region spans residues 40–390 (MVGYNESISD…NVCGEQQHKS (351 aa)). L-glutamine is bound by residues Ser-51, Gly-245, and Gly-247. Residues 196–388 (KVIVLDCGIK…VDNVCGEQQH (193 aa)) enclose the Glutamine amidotransferase type-1 domain. Cys-275 serves as the catalytic Nucleophile; for GATase activity. Residues Gln-279, Asn-317, Gly-319, and Phe-320 each contribute to the L-glutamine site. Active-site for GATase activity residues include His-361 and Glu-363. The linker stretch occupies residues 391 to 405 (PMNKSKIIDCPKGIN). Residues 406-948 (KVLILGSGGL…TNDVNINEKS (543 aa)) are CPSase A. The CPSase (Carbamoyl-phosphate synthase) stretch occupies residues 406-1461 (KVLILGSGGL…MKGPMPIENV (1056 aa)). 11 residues coordinate ATP: Arg-526, Arg-566, Gly-572, Gly-573, Lys-603, Glu-610, Gly-636, Ile-637, His-638, Gln-679, and Glu-693. 2 consecutive ATP-grasp domains span residues 530–722 (AEKL…KVAL) and 1069–1260 (SRLL…KIII). Mg(2+) is bound by residues Gln-679, Glu-693, and Asn-695. Mn(2+) contacts are provided by Gln-679, Glu-693, and Asn-695. Positions 949–1461 (YITLGSGSYR…MKGPMPIENV (513 aa)) are CPSase B. 10 residues coordinate ATP: Arg-1105, Lys-1144, Ile-1146, Glu-1151, Gly-1176, Val-1177, His-1178, Ser-1179, Gln-1219, and Glu-1231. The Mg(2+) site is built by Gln-1219, Glu-1231, and Asn-1233. Mn(2+)-binding residues include Gln-1219, Glu-1231, and Asn-1233. The region spanning 1324 to 1470 (FKAPEKNVLL…VDWRTSNKII (147 aa)) is the MGS-like domain. Residues 1463 to 1797 (WRTSNKIIRL…VRGKVVKVVL (335 aa)) form a DHOase (dihydroorotase) region. The Zn(2+) site is built by His-1479 and His-1481. 2 residues coordinate (S)-dihydroorotate: Arg-1483 and Asn-1513. Zn(2+)-binding residues include Lys-1564, His-1599, Cys-1622, His-1623, and Glu-1646. Lys-1564 carries the N6-carboxylysine modification. Position 1670 (Arg-1670) interacts with (S)-dihydroorotate. Residue Asp-1695 participates in Zn(2+) binding. Residue Asp-1695 is the For DHOase activity of the active site. Positions 1699 and 1711 each coordinate (S)-dihydroorotate. The tract at residues 1798–1916 (RGQIAFIDGK…DTLQTAFNIS (119 aa)) is linker. The tract at residues 1917–2225 (DNSLAGKHIF…LLALVFGAGV (309 aa)) is ATCase (Aspartate transcarbamylase). Carbamoyl phosphate contacts are provided by Arg-1974 and Thr-1975. Lys-2002 contributes to the L-aspartate binding site. The carbamoyl phosphate site is built by Arg-2023, His-2051, and Gln-2054. L-aspartate contacts are provided by Arg-2084 and Arg-2145. Carbamoyl phosphate-binding residues include Leu-2184 and Pro-2185.

This sequence in the N-terminal section; belongs to the CarA family. It in the 2nd section; belongs to the CarB family. The protein in the 3rd section; belongs to the metallo-dependent hydrolases superfamily. DHOase family. CAD subfamily. In the C-terminal section; belongs to the aspartate/ornithine carbamoyltransferase superfamily. ATCase family. Homohexamer. Mg(2+) is required as a cofactor. Mn(2+) serves as cofactor. Requires Zn(2+) as cofactor.

The protein resides in the cytoplasm. The enzyme catalyses hydrogencarbonate + L-glutamine + 2 ATP + H2O = carbamoyl phosphate + L-glutamate + 2 ADP + phosphate + 2 H(+). It catalyses the reaction L-glutamine + H2O = L-glutamate + NH4(+). The catalysed reaction is hydrogencarbonate + NH4(+) + 2 ATP = carbamoyl phosphate + 2 ADP + phosphate + 2 H(+). It carries out the reaction carbamoyl phosphate + L-aspartate = N-carbamoyl-L-aspartate + phosphate + H(+). The enzyme catalyses (S)-dihydroorotate + H2O = N-carbamoyl-L-aspartate + H(+). Its pathway is pyrimidine metabolism; UMP biosynthesis via de novo pathway; (S)-dihydroorotate from bicarbonate: step 1/3. It functions in the pathway pyrimidine metabolism; UMP biosynthesis via de novo pathway; (S)-dihydroorotate from bicarbonate: step 2/3. It participates in pyrimidine metabolism; UMP biosynthesis via de novo pathway; (S)-dihydroorotate from bicarbonate: step 3/3. Allosterically regulated and controlled by phosphorylation. 5-phosphoribose 1-diphosphate is an activator while UMP is an inhibitor of the CPSase reaction. In terms of biological role, multifunctional protein that encodes the first 3 enzymatic activities of the de novo pyrimidine pathway: carbamoylphosphate synthetase (CPSase; EC 6.3.5.5), aspartate transcarbamylase (ATCase; EC 2.1.3.2) and dihydroorotase (DHOase; EC 3.5.2.3). The CPSase-function is accomplished in 2 steps, by a glutamine-dependent amidotransferase activity (GATase) that binds and cleaves glutamine to produce ammonia, followed by an ammonium-dependent carbamoyl phosphate synthetase, which reacts with the ammonia, hydrogencarbonate and ATP to form carbamoyl phosphate. The endogenously produced carbamoyl phosphate is sequestered and channeled to the ATCase active site. ATCase then catalyzes the formation of carbamoyl-L-aspartate from L-aspartate and carbamoyl phosphate. In the last step, DHOase catalyzes the cyclization of carbamoyl aspartate to dihydroorotate. This Dictyostelium discoideum (Social amoeba) protein is Multifunctional protein pyr1-3 (pyr1-3).